Consider the following 53-residue polypeptide: UPF0391 membrane protein gsr2640 (53 aa).

The next 2 membrane-spanning stretches (helical) occupy residues 4 to 24 (LLWLVVVLMVIAALLGFGGVV) and 32 to 49 (WFLIVAAVVLAVVGFVTG).

The protein belongs to the UPF0391 family.

The protein resides in the cell membrane. In Gloeobacter violaceus (strain ATCC 29082 / PCC 7421), this protein is UPF0391 membrane protein gsr2640.